Reading from the N-terminus, the 118-residue chain is Large ribosomal subunit protein bL19 (118 aa).

It belongs to the bacterial ribosomal protein bL19 family.

In terms of biological role, this protein is located at the 30S-50S ribosomal subunit interface and may play a role in the structure and function of the aminoacyl-tRNA binding site. The protein is Large ribosomal subunit protein bL19 of Campylobacter fetus subsp. fetus (strain 82-40).